Consider the following 358-residue polypeptide: Src kinase-associated phosphoprotein 2 (358 aa).

Phosphoserine is present on residues Ser-5 and Ser-9. The homodimerization stretch occupies residues 14–64; sequence PEEIRNLLADVETFVADTLKGENLSKKAKEKRESLIKKIKDVKSVYLQEFQ. At Tyr-75 the chain carries Phosphotyrosine. 2 positions are modified to phosphoserine: Ser-87 and Ser-90. The region spanning 116–219 is the PH domain; sequence FVIKAGYLEK…WVQQLKFILQ (104 aa). 2 positions are modified to phosphotyrosine: Tyr-151 and Tyr-197. Ser-223 carries the phosphoserine modification. The interval 232–292 is disordered; the sequence is ERGELYDDVD…RDSVHHTSGD (61 aa). The segment covering 255 to 270 has biased composition (acidic residues); the sequence is IDDEIYEELPEEEEDT. Tyr-260 carries the phosphotyrosine; by FYN modification. Phosphoserine occurs at positions 272, 282, and 285. The segment covering 274 to 292 has biased composition (basic and acidic residues); the sequence is KMDEQGKGSRDSVHHTSGD. Positions 296–357 constitute an SH3 domain; that stretch reads DYANFYQGLW…PKAYLMEMYD (62 aa).

It belongs to the SKAP family. As to quaternary structure, interacts with LAT, GRB2, PTK2B and PRAM1. Homodimer. Interacts with FYB1, which is required for SKAP2 protein stability. Interacts with PTPNS1. Part of a complex consisting of SKAP2, FYB1 and PTPNS1. Part of a complex consisting of SKAP2, FYB1 and PIRB. May interact with actin. May interact with FYN, HCK and LYN. Interacts with FASLG. In terms of processing, dephosphorylated on Tyr-75 by PTPN22. Phosphorylated by FYN on Tyr-260. In case of infection with Y.pseudotuberculosis, dephosphorylated by bacterial phosphatase yopH. In terms of tissue distribution, expressed in kidney, lung, liver, spleen, bone marrow and testis. Present in T-cells, B-cells, and all cells of the myelomonocytic lineage. Present in all brain regions, with highest levels in neurons from the Purkinje cell layer, hippocampal gyrus, cortex and substantia nigra (at protein level).

The protein localises to the cytoplasm. May be involved in B-cell and macrophage adhesion processes. In B-cells, may act by coupling the B-cell receptor (BCR) to integrin activation. May play a role in src signaling pathway. The polypeptide is Src kinase-associated phosphoprotein 2 (Skap2) (Mus musculus (Mouse)).